We begin with the raw amino-acid sequence, 281 residues long: Urease accessory protein UreD 2 (281 aa).

Belongs to the UreD family. In terms of assembly, ureD, UreF and UreG form a complex that acts as a GTP-hydrolysis-dependent molecular chaperone, activating the urease apoprotein by helping to assemble the nickel containing metallocenter of UreC. The UreE protein probably delivers the nickel.

The protein localises to the cytoplasm. Required for maturation of urease via the functional incorporation of the urease nickel metallocenter. The sequence is that of Urease accessory protein UreD 2 from Pseudomonas syringae pv. tomato (strain ATCC BAA-871 / DC3000).